Reading from the N-terminus, the 663-residue chain is UvrABC system protein B (663 aa).

The Helicase ATP-binding domain occupies 30–417 (DGIKAGKRHQ…TDKMVEQIIR (388 aa)). 43–50 (GATGTGKT) is an ATP binding site. Positions 96–119 (YYDYYQPEAYVPSTDTFIEKDASI) match the Beta-hairpin motif. The 167-residue stretch at 434–600 (QIDDLLSEIQ…TINKKIHDLI (167 aa)) folds into the Helicase C-terminal domain. The UVR domain occupies 627 to 662 (QKTIDNIEKEMKQAAKDLDFEKATELRDMLFELKAE).

Belongs to the UvrB family. Forms a heterotetramer with UvrA during the search for lesions. Interacts with UvrC in an incision complex.

The protein resides in the cytoplasm. Functionally, the UvrABC repair system catalyzes the recognition and processing of DNA lesions. A damage recognition complex composed of 2 UvrA and 2 UvrB subunits scans DNA for abnormalities. Upon binding of the UvrA(2)B(2) complex to a putative damaged site, the DNA wraps around one UvrB monomer. DNA wrap is dependent on ATP binding by UvrB and probably causes local melting of the DNA helix, facilitating insertion of UvrB beta-hairpin between the DNA strands. Then UvrB probes one DNA strand for the presence of a lesion. If a lesion is found the UvrA subunits dissociate and the UvrB-DNA preincision complex is formed. This complex is subsequently bound by UvrC and the second UvrB is released. If no lesion is found, the DNA wraps around the other UvrB subunit that will check the other stand for damage. This Staphylococcus aureus (strain Mu50 / ATCC 700699) protein is UvrABC system protein B.